Here is a 126-residue protein sequence, read N- to C-terminus: uncharacterized protein (126 aa).

Residues 48 to 68 (ILCMFPWQCVVYVFSNFVWLV) form a helical membrane-spanning segment.

It localises to the membrane. This is an uncharacterized protein from Homo sapiens (Human).